The following is a 247-amino-acid chain: Probable transcriptional regulatory protein lpp1249 (247 aa).

It belongs to the TACO1 family.

It is found in the cytoplasm. The polypeptide is Probable transcriptional regulatory protein lpp1249 (Legionella pneumophila (strain Paris)).